The sequence spans 147 residues: Prefoldin subunit alpha (147 aa).

Belongs to the prefoldin alpha subunit family. In terms of assembly, heterohexamer of two alpha and four beta subunits.

The protein resides in the cytoplasm. Molecular chaperone capable of stabilizing a range of proteins. Seems to fulfill an ATP-independent, HSP70-like function in archaeal de novo protein folding. The protein is Prefoldin subunit alpha of Methanocorpusculum labreanum (strain ATCC 43576 / DSM 4855 / Z).